The primary structure comprises 374 residues: MSKGIILLAAGGTGGHVFPAEALAYKLKERGYSVHLVTDSRAERYAGKFPADEIHVVPSATIGSKNPIKVARSLWTLWTGIRAARKLIRTIKPLCVVGFGGYPTVPPLLAATRMGVPAMIHEQNAVMGRANKALAARVQAIAGGFLPENGGTFPEKTVTTGNPVRPAVIEAAKQPYVPSVPDDPFNLVVFGGSQGAQYFSKAVPTAISLLEEPLRKRLRITQQVRPEDMETVNSCTRKLEMGADIAPFFSDMAERIGAAHLVLCRSGASTVSELAVIGRPAILVPYPYALDHDQAANAAALAATGGVKVIPQAELTPEKLSTILRGAMTMPDKLAKMAAAAKQAGKPDAASLLADMVEAIAAKRSIQDFKGAGV.

Residues 13–15 (TGG), Asn124, Arg165, Ser193, and Gln294 contribute to the UDP-N-acetyl-alpha-D-glucosamine site.

The protein belongs to the glycosyltransferase 28 family. MurG subfamily.

The protein resides in the cell inner membrane. It catalyses the reaction di-trans,octa-cis-undecaprenyl diphospho-N-acetyl-alpha-D-muramoyl-L-alanyl-D-glutamyl-meso-2,6-diaminopimeloyl-D-alanyl-D-alanine + UDP-N-acetyl-alpha-D-glucosamine = di-trans,octa-cis-undecaprenyl diphospho-[N-acetyl-alpha-D-glucosaminyl-(1-&gt;4)]-N-acetyl-alpha-D-muramoyl-L-alanyl-D-glutamyl-meso-2,6-diaminopimeloyl-D-alanyl-D-alanine + UDP + H(+). It participates in cell wall biogenesis; peptidoglycan biosynthesis. In terms of biological role, cell wall formation. Catalyzes the transfer of a GlcNAc subunit on undecaprenyl-pyrophosphoryl-MurNAc-pentapeptide (lipid intermediate I) to form undecaprenyl-pyrophosphoryl-MurNAc-(pentapeptide)GlcNAc (lipid intermediate II). This Rhizobium rhizogenes (strain K84 / ATCC BAA-868) (Agrobacterium radiobacter) protein is UDP-N-acetylglucosamine--N-acetylmuramyl-(pentapeptide) pyrophosphoryl-undecaprenol N-acetylglucosamine transferase.